An 85-amino-acid polypeptide reads, in one-letter code: Small ribosomal subunit protein bS20 (85 aa).

It belongs to the bacterial ribosomal protein bS20 family.

Its function is as follows. Binds directly to 16S ribosomal RNA. This chain is Small ribosomal subunit protein bS20, found in Borreliella afzelii (strain PKo) (Borrelia afzelii).